The following is a 411-amino-acid chain: Tyrosine--tRNA ligase (411 aa).

Residues 48-57 (PTAPDIHLGH) carry the 'HIGH' region motif. The short motif at 232–236 (KMSKS) is the 'KMSKS' region element. Lys-235 serves as a coordination point for ATP. The S4 RNA-binding domain maps to 347–409 (VLLPKVLFSA…GKRRFLKIIF (63 aa)).

It belongs to the class-I aminoacyl-tRNA synthetase family. TyrS type 2 subfamily. Homodimer.

Its subcellular location is the cytoplasm. The enzyme catalyses tRNA(Tyr) + L-tyrosine + ATP = L-tyrosyl-tRNA(Tyr) + AMP + diphosphate + H(+). Its function is as follows. Catalyzes the attachment of tyrosine to tRNA(Tyr) in a two-step reaction: tyrosine is first activated by ATP to form Tyr-AMP and then transferred to the acceptor end of tRNA(Tyr). The chain is Tyrosine--tRNA ligase from Carboxydothermus hydrogenoformans (strain ATCC BAA-161 / DSM 6008 / Z-2901).